Consider the following 139-residue polypeptide: ATP synthase epsilon chain (139 aa).

It belongs to the ATPase epsilon chain family. F-type ATPases have 2 components, CF(1) - the catalytic core - and CF(0) - the membrane proton channel. CF(1) has five subunits: alpha(3), beta(3), gamma(1), delta(1), epsilon(1). CF(0) has three main subunits: a, b and c.

The protein resides in the cell membrane. In terms of biological role, produces ATP from ADP in the presence of a proton gradient across the membrane. The polypeptide is ATP synthase epsilon chain (Pediococcus pentosaceus (strain ATCC 25745 / CCUG 21536 / LMG 10740 / 183-1w)).